The following is a 408-amino-acid chain: Serine/threonine-protein kinase ATG1t (408 aa).

The 266-residue stretch at 7 to 272 (YIAKSKLSES…GRIKNSRVWV (266 aa)) folds into the Protein kinase domain. Residues 13 to 21 (LSESLTSTV) and Lys-36 contribute to the ATP site. Asp-129 serves as the catalytic Proton acceptor.

It belongs to the protein kinase superfamily. Ser/Thr protein kinase family.

The protein localises to the cytoplasmic vesicle. It is found in the autophagosome. Serine/threonine protein kinase involved in autophagy. The ATG1-ATG13 protein kinase complex regulates downstream events required for autophagosome enclosure and/or vacuolar delivery. This Arabidopsis thaliana (Mouse-ear cress) protein is Serine/threonine-protein kinase ATG1t.